Reading from the N-terminus, the 635-residue chain is ATP-binding protein Uup (635 aa).

ABC transporter domains are found at residues 1-253 and 320-546; these read MSLI…RVEE and FEME…KTEE. Residues 36-43 and 352-359 contribute to the ATP site; these read GRNGAGKS and GPNGCGKT. The interval 551-635 is C-terminal domain (CTD), binds DNA, required to complement a deletion mutant; that stretch reads KAETVKRSSS…EYLEALKNGG (85 aa). A coiled-coil region spans residues 563 to 631; the sequence is SYKLQRELEQ…FERWEYLEAL (69 aa).

This sequence belongs to the ABC transporter superfamily. ABCF family. Uup subfamily.

It localises to the cytoplasm. The enzyme catalyses ATP + H2O = ADP + phosphate + H(+). Its activity is regulated as follows. ATPase activity inhibited by N-ethylmaleimide but not by vanadate. Probably plays a role in ribosome assembly or function; overexpression suppresses cold-sensitive growth of a bipA deletion. May be involved in resolution of branched DNA intermediates that result from template switching in postreplication gaps. Binds DNA at Holliday junctions. May be involved in the correct segregation of nucleoids. Has ATPase activity, binds DNA non-sequence specifically; the presence of DNA does not change the ATPase activity. Mutations in this gene cause an increase in RecA-independent precise excision of transposons and insertion elements, and also reduce bacteriophage Mu growth. Genetic interactions among priB, dam, lexA, nagC, polA, rdgB, rdgB, rep and uup link the PriA-PriB replication restart pathway to DNA double-strand break repair. In Escherichia coli (strain K12), this protein is ATP-binding protein Uup.